A 165-amino-acid polypeptide reads, in one-letter code: 3-isopropylmalate dehydratase small subunit (165 aa).

Belongs to the LeuD family. LeuD type 2 subfamily. Heterodimer of LeuC and LeuD.

The enzyme catalyses (2R,3S)-3-isopropylmalate = (2S)-2-isopropylmalate. It participates in amino-acid biosynthesis; L-leucine biosynthesis; L-leucine from 3-methyl-2-oxobutanoate: step 2/4. Functionally, catalyzes the isomerization between 2-isopropylmalate and 3-isopropylmalate, via the formation of 2-isopropylmaleate. The sequence is that of 3-isopropylmalate dehydratase small subunit from Helicobacter hepaticus (strain ATCC 51449 / 3B1).